We begin with the raw amino-acid sequence, 270 residues long: Transmembrane protein 176B (270 aa).

A run of 4 helical transmembrane segments spans residues 65 to 85 (LALG…GVCL), 95 to 115 (ASGC…GAIV), 127 to 147 (VSSL…VLCV), and 209 to 229 (LFLA…GVGL). 4 positions are modified to phosphoserine: Ser236, Ser245, Ser254, and Ser258. The interval 237-270 (SQPLNEEGSEKRLLGENSVPPSPSREQTSTAIVL) is disordered. Residues 260 to 270 (SREQTSTAIVL) are compositionally biased toward polar residues.

Belongs to the TMEM176 family.

It is found in the nucleus membrane. In terms of biological role, may play a role in the process of maturation of dendritic cells. Required for the development of cerebellar granule cells. This Pongo abelii (Sumatran orangutan) protein is Transmembrane protein 176B (TMEM176B).